We begin with the raw amino-acid sequence, 188 residues long: GMP synthase [glutamine-hydrolyzing] subunit A (188 aa).

The Glutamine amidotransferase type-1 domain occupies Met1–Leu188. The active-site Nucleophile is Cys78. Residues His165 and Glu167 contribute to the active site.

In terms of assembly, heterodimer composed of a glutamine amidotransferase subunit (A) and a GMP-binding subunit (B).

It carries out the reaction XMP + L-glutamine + ATP + H2O = GMP + L-glutamate + AMP + diphosphate + 2 H(+). It participates in purine metabolism; GMP biosynthesis; GMP from XMP (L-Gln route): step 1/1. In terms of biological role, catalyzes the synthesis of GMP from XMP. In Pyrococcus abyssi (strain GE5 / Orsay), this protein is GMP synthase [glutamine-hydrolyzing] subunit A.